A 212-amino-acid polypeptide reads, in one-letter code: ER lumen protein-retaining receptor 1 (212 aa).

Topologically, residues 1 to 4 (MNLF) are lumenal. A helical transmembrane segment spans residues 5–24 (RFLGDLSHLLAIILLLLKIW). The Cytoplasmic portion of the chain corresponds to 25-32 (KSRSCAGI). Residues 33–52 (SGKSQVLFAVVFTARYLDLF) traverse the membrane as a helical segment. Residues 47-48 (RY) are interaction with the K-D-E-L motif on target proteins. Topologically, residues 53–58 (TNYISL) are lumenal. Residues 59 to 79 (YNTCMKVVYIACSFTTVWMIY) traverse the membrane as a helical segment. Residues 80-92 (SKFKATYDGNHDT) lie on the Cytoplasmic side of the membrane. A helical transmembrane segment spans residues 93–110 (FRVEFLVIPTAILAFLVN). Over 111-116 (HDFTPL) the chain is Lumenal. The helical transmembrane segment at 117-135 (EILWTFSIYLESVAILPQL) threads the bilayer. At 136–149 (FMVSKTGEAETITS) the chain is on the cytoplasmic side. Residues 150 to 168 (HYLFALGVYRTLYLFNWIW) traverse the membrane as a helical segment. The interaction with the K-D-E-L motif on target proteins stretch occupies residues 159 to 169 (RTLYLFNWIWR). Residues 169 to 178 (RYHFEGFFDL) are Lumenal-facing. A helical membrane pass occupies residues 179-199 (IAIVAGLVQTVLYCDFFYLYI). Over 200–212 (TKVLKGKKLSLPA) the chain is Cytoplasmic. The interval 204-207 (KGKK) is important for recycling of cargo proteins with the sequence motif K-D-E-L from the Golgi to the endoplasmic reticulum. Position 209 is a phosphoserine; by PKA (Ser209).

The protein belongs to the ERD2 family. As to quaternary structure, upon ligand binding the receptor oligomerizes and interacts with components of the transport machinery such as ARFGAP1 and ARF1. Phosphorylation by PKA at Ser-209 is required for endoplasmic reticulum retention function.

Its subcellular location is the golgi apparatus membrane. It is found in the cytoplasmic vesicle. The protein localises to the COPI-coated vesicle membrane. The protein resides in the endoplasmic reticulum membrane. It localises to the endoplasmic reticulum-Golgi intermediate compartment membrane. Receptor for the C-terminal sequence motif K-D-E-L that is present on endoplasmic reticulum resident proteins and that mediates their recycling from the Golgi back to the endoplasmic reticulum. This is ER lumen protein-retaining receptor 1 (KDELR1) from Bos taurus (Bovine).